Here is a 1184-residue protein sequence, read N- to C-terminus: PR domain zinc finger protein 10 (1184 aa).

The interval 122–162 is disordered; that stretch reads LDAKEEEEEEEDEDEDTEEEEEEDAEDTDVDDWQPDPPRPF. The span at 125–155 shows a compositional bias: acidic residues; that stretch reads KEEEEEEEDEDEDTEEEEEEDAEDTDVDDWQ. An SET domain is found at 202–320; that stretch reads LPLVLYIDRF…PKQELKVWYA (119 aa). The N-terminal PR domain; essential for transcriptional activator activity stretch occupies residues 221–325; sequence IPKRTQFGPV…KVWYAASYAE (105 aa). The segment at 349–371 adopts a C2H2-type 1 zinc-finger fold; the sequence is WPCYECNRRFISSEQLQQHLNSH. A Glycyl lysine isopeptide (Lys-Gly) (interchain with G-Cter in SUMO2) cross-link involves residue lysine 374. Residues 381–401 show a composition bias toward basic residues; that stretch reads TRGRGRGRGKRRFGPGRRPGR. The tract at residues 381 to 405 is disordered; sequence TRGRGRGRGKRRFGPGRRPGRPPKF. The residue at position 418 (serine 418) is a Phosphoserine. Position 422 is a phosphothreonine (threonine 422). The tract at residues 444-487 is disordered; it reads GLDQPEQASIPIPQLPQETPPSLEQEPETHTLHLQPQQEESLVP. Positions 475–487 are enriched in polar residues; that stretch reads LHLQPQQEESLVP. 8 C2H2-type zinc fingers span residues 520 to 542, 550 to 572, 578 to 600, 606 to 629, 634 to 656, 662 to 685, 717 to 740, and 850 to 873; these read FKCLQCGKAFREKDKLDQHLRFH, LTCDLCNKGFISSASLESHMKLH, YSCIFCPESFDRLDLLKDHVAIH, FTCPTCKKRFPDFIQVKKHVRSFH, YQCTECDKAFCRPDKLRLHMLRH, FLCSTCGKQFKRKDKLREHMQRMH, FKCRLCMMGFRRRGMLVNHLSKRH, and VCCPHCSKQYSSKTKMVQHIRKKH. The tract at residues 917–1164 is C-terminal glutamine-rich region; essential for transcriptional activator activity; the sequence is QAMTELSQTL…TGPSQQQTTQ (248 aa). Residues 1004-1054 are disordered; that stretch reads EPAPAAPSASQVAGQPLSPSAQQVQQGLSPSHIQGSSSTQGQALQQQQNSS. The segment covering 1014 to 1036 has biased composition (polar residues); that stretch reads QVAGQPLSPSAQQVQQGLSPSHI. Residues 1037–1054 show a composition bias toward low complexity; it reads QGSSSTQGQALQQQQNSS.

The protein belongs to the class V-like SAM-binding methyltransferase superfamily. Present in brain, liver, kidney, spleen and thymus (at protein level).

Its subcellular location is the nucleus. Functionally, transcriptional activator, essential for early embryonic development and survival of embryonic stem cells (ESCs). Supports cell growth and survival during early development by transcriptionally activating the expression of the translation initiation factor EIF3B, to sustain global translation. Activates the transcription of FLNC. This is PR domain zinc finger protein 10 (Prdm10) from Mus musculus (Mouse).